We begin with the raw amino-acid sequence, 777 residues long: Glucocorticoid receptor (777 aa).

Basic and acidic residues predominate over residues 1-14; sequence MDSKESLTPGKEEN. The disordered stretch occupies residues 1 to 23; it reads MDSKESLTPGKEENPSSVLTQER. A modulating region spans residues 1–420; sequence MDSKESLTPG…TATTGPPPKL (420 aa). Threonine 8 is subject to Phosphothreonine. Arginine 23 carries the post-translational modification Omega-N-methylarginine. A phosphoserine mark is found at serine 45, serine 113, serine 134, and serine 141. The interval 130–182 is disordered; it reads NRSTSVPENPKSSASSSVSAAPKEKEFPKTHSDVSSEQQNLKGQTGTNGGNVK. A compositionally biased stretch (low complexity) spans 134-150; sequence SVPENPKSSASSSVSAA. Basic and acidic residues predominate over residues 151–163; it reads PKEKEFPKTHSDV. Residues 164–174 show a composition bias toward polar residues; sequence SSEQQNLKGQT. Phosphoserine is present on residues serine 203, serine 211, and serine 226. Residue lysine 258 forms a Glycyl lysine isopeptide (Lys-Gly) (interchain with G-Cter in SUMO2) linkage. Serine 267 carries the phosphoserine modification. Glycyl lysine isopeptide (Lys-Gly) (interchain with G-Cter in SUMO); alternate cross-links involve residues lysine 277 and lysine 293. Glycyl lysine isopeptide (Lys-Gly) (interchain with G-Cter in SUMO2); alternate cross-links involve residues lysine 277 and lysine 293. Residues 394-414 are compositionally biased toward low complexity; the sequence is SSPSMRPDVSSPPSSSSTATT. A disordered region spans residues 394 to 415; sequence SSPSMRPDVSSPPSSSSTATTG. Serine 404 carries the phosphoserine modification. Residue lysine 419 forms a Glycyl lysine isopeptide (Lys-Gly) (interchain with G-Cter in ubiquitin) linkage. NR C4-type zinc fingers lie at residues 421–441 and 457–481; these read CLVC…CGSC and CAGR…YRKC. Positions 421–486 form a DNA-binding region, nuclear receptor; the sequence is CLVCSDEASG…RYRKCLQAGM (66 aa). Lysine 480, lysine 492, lysine 494, and lysine 495 each carry N6-acetyllysine. The segment at 485–777 is interaction with CLOCK; that stretch reads GMNLEARKTK…NIKKLLFHQK (293 aa). A hinge region spans residues 487–523; sequence NLEARKTKKKIKGIQQATTGVSQETSENPANKTIVPA. The NR LBD domain occupies 524 to 758; sequence TLPQLTPTLV…FPEMLAEIIT (235 aa). The interaction with CRY1 stretch occupies residues 532–697; sequence LVSLLEVIEP…EIRMTYIKEL (166 aa). Lysine 703 is covalently cross-linked (Glycyl lysine isopeptide (Lys-Gly) (interchain with G-Cter in SUMO)).

This sequence belongs to the nuclear hormone receptor family. NR3 subfamily. Heteromultimeric cytoplasmic complex with HSP90AA1, HSPA1A/HSPA1B, and FKBP5 or another immunophilin such as PPID, STIP1, or the immunophilin homolog PPP5C. Upon ligand binding FKBP5 dissociates from the complex and FKBP4 takes its place, thereby linking the complex to dynein and mediating transport to the nucleus, where the complex dissociates. Probably forms a complex composed of chaperones HSP90 and HSP70, co-chaperones CDC37, PPP5C, TSC1 and client protein TSC2, CDK4, AKT, RAF1 and NR3C1; this complex does not contain co-chaperones STIP1/HOP and PTGES3/p23. Directly interacts with UNC45A. Binds to DNA as a homodimer, and as heterodimer with NR3C2 or the retinoid X receptor. Binds STAT5A and STAT5B homodimers and heterodimers. Interacts with NRIP1, POU2F1, POU2F2 and TRIM28. Interacts with several coactivator complexes, including the SMARCA4 complex, CREBBP/EP300, TADA2L (Ada complex) and p160 coactivators such as NCOA2 and NCOA6. Interaction with BAG1 inhibits transactivation. Interacts with HEXIM1 and TGFB1I1. Interacts with NCOA1. Interacts with NCOA3, SMARCA4, SMARCC1, SMARCD1, and SMARCE1. Interacts with CLOCK, CRY1 and CRY2 in a ligand-dependent fashion. Interacts with CIART. Interacts with RWDD3. Interacts with UBE2I/UBC9 and this interaction is enhanced in the presence of RWDD3. Interacts with GRIP1. Interacts with NR4A3 (via nuclear receptor DNA-binding domain), represses transcription activity of NR4A3 on the POMC promoter Nur response element (NurRE). Directly interacts with PNRC2 to attract and form a complex with UPF1 and DCP1A; the interaction leads to rapid mRNA degradation. Interacts with GSK3B. Interacts with FNIP1 and FNIP2. Interacts (via C-terminus) with HNRNPU (via C-terminus). Interacts with MCM3AP. Interacts (via domain NR LBD) with HSP90AA1 and HSP90AB1. In the absence of hormonal ligand, interacts with TACC1. Interacts (via NR LBD domain) with ZNF764 (via KRAB domain); the interaction regulates transcription factor activity of NR3C1 by directing its actions toward certain biologic pathways. Post-translationally, acetylation by CLOCK reduces its binding to glucocorticoid response elements and its transcriptional activity. In terms of processing, increased proteasome-mediated degradation in response to glucocorticoids. Phosphorylated in the absence of hormone; becomes hyperphosphorylated in the presence of glucocorticoid. The Ser-203, Ser-226 and Ser-404-phosphorylated forms are mainly cytoplasmic, and the Ser-211-phosphorylated form is nuclear. Phosphorylation at Ser-211 increases transcriptional activity. Phosphorylation at Ser-203, Ser-226 and Ser-404 decreases signaling capacity. Phosphorylation at Ser-404 may protect from glucocorticoid-induced apoptosis. Phosphorylation at Ser-203 and Ser-211 is not required in regulation of chromosome segregation. May be dephosphorylated by PPP5C, attenuates NR3C1 action. Post-translationally, ubiquitinated by UBR5, leading to its degradation: UBR5 specifically recognizes and binds ligand-bound NR3C1 when it is not associated with coactivators (NCOAs). In presence of NCOAs, the UBR5-degron is not accessible, preventing its ubiquitination and degradation. In terms of processing, sumoylation at Lys-277 and Lys-293 negatively regulates its transcriptional activity. Sumoylation at Lys-703 positively regulates its transcriptional activity in the presence of RWDD3. Sumoylation at Lys-277 and Lys-293 is dispensable whereas sumoylation at Lys-703 is critical for the stimulatory effect of RWDD3 on its transcriptional activity. Heat shock increases sumoylation in a RWWD3-dependent manner.

Its subcellular location is the cytoplasm. The protein localises to the nucleus. It is found in the mitochondrion. The protein resides in the cytoskeleton. It localises to the spindle. Its subcellular location is the microtubule organizing center. The protein localises to the centrosome. It is found in the chromosome. The protein resides in the nucleoplasm. Receptor for glucocorticoids (GC). Has a dual mode of action: as a transcription factor that binds to glucocorticoid response elements (GRE), both for nuclear and mitochondrial DNA, and as a modulator of other transcription factors. Affects inflammatory responses, cellular proliferation and differentiation in target tissues. Involved in chromatin remodeling. Plays a role in rapid mRNA degradation by binding to the 5' UTR of target mRNAs and interacting with PNRC2 in a ligand-dependent manner which recruits the RNA helicase UPF1 and the mRNA-decapping enzyme DCP1A, leading to RNA decay. Could act as a coactivator for STAT5-dependent transcription upon growth hormone (GH) stimulation and could reveal an essential role of hepatic GR in the control of body growth. Mediates glucocorticoid-induced apoptosis. Promotes accurate chromosome segregation during mitosis. May act as a tumor suppressor. May play a negative role in adipogenesis through the regulation of lipolytic and antilipogenic gene expression. The sequence is that of Glucocorticoid receptor (NR3C1) from Aotus nancymaae (Ma's night monkey).